The following is a 361-amino-acid chain: Phospho-N-acetylmuramoyl-pentapeptide-transferase (361 aa).

10 helical membrane passes run 25-45 (RGILAALTALFLSLWMGPAVI), 73-93 (TMGGSLILLTVTLSVLLWGDL), 98-118 (VWLVLAVMICFGAIGWYDDWI), 139-159 (IFGLAAGLFLYYTADVPAAIT), 168-188 (IALPLAGVSFVVIAYFWIVGF), 200-220 (GLAIMPTVLVACALGVFAYAS), 237-257 (AGELIIICSAIAGAGLGFLWF), 264-284 (VFMGDIGALSLGAVLGTIAVI), 289-309 (MVLVIMGGVFVIETLSVMIQV), and 339-359 (VIVRFWIISVVLVLIGLATLK).

Belongs to the glycosyltransferase 4 family. MraY subfamily. Requires Mg(2+) as cofactor.

It localises to the cell inner membrane. The catalysed reaction is UDP-N-acetyl-alpha-D-muramoyl-L-alanyl-gamma-D-glutamyl-meso-2,6-diaminopimeloyl-D-alanyl-D-alanine + di-trans,octa-cis-undecaprenyl phosphate = di-trans,octa-cis-undecaprenyl diphospho-N-acetyl-alpha-D-muramoyl-L-alanyl-D-glutamyl-meso-2,6-diaminopimeloyl-D-alanyl-D-alanine + UMP. Its pathway is cell wall biogenesis; peptidoglycan biosynthesis. Its function is as follows. Catalyzes the initial step of the lipid cycle reactions in the biosynthesis of the cell wall peptidoglycan: transfers peptidoglycan precursor phospho-MurNAc-pentapeptide from UDP-MurNAc-pentapeptide onto the lipid carrier undecaprenyl phosphate, yielding undecaprenyl-pyrophosphoryl-MurNAc-pentapeptide, known as lipid I. This is Phospho-N-acetylmuramoyl-pentapeptide-transferase from Xanthomonas axonopodis pv. citri (strain 306).